A 133-amino-acid chain; its full sequence is MKRKHKRLLFIIVTFIIFGSSVVIVLNKLRSNISFFFTPTEVLSGSINVSSNDIRIGGMVISGSLKRYDNLISFFITDLESQIKVVYQGILPPLFSEGSWVVAKGKMVNGEFNANEILAKHDENYKPGKYRAK.

Residues 1 to 7 (MKRKHKR) are Cytoplasmic-facing. The helical; Signal-anchor for type II membrane protein transmembrane segment at 8 to 28 (LLFIIVTFIIFGSSVVIVLNK) threads the bilayer. Residues 29–133 (LRSNISFFFT…NYKPGKYRAK (105 aa)) lie on the Periplasmic side of the membrane. Residues H121 and Y125 each coordinate heme.

Belongs to the CcmE/CycJ family.

The protein localises to the cell inner membrane. Functionally, heme chaperone required for the biogenesis of c-type cytochromes. Transiently binds heme delivered by CcmC and transfers the heme to apo-cytochromes in a process facilitated by CcmF and CcmH. The chain is Cytochrome c-type biogenesis protein CcmE from Ehrlichia canis (strain Jake).